The primary structure comprises 498 residues: ATP synthase subunit beta, chloroplastic (498 aa).

At threonine 6 the chain carries Phosphothreonine. A Phosphoserine modification is found at serine 13. 172–179 (GGAGVGKT) is a binding site for ATP.

Belongs to the ATPase alpha/beta chains family. As to quaternary structure, F-type ATPases have 2 components, CF(1) - the catalytic core - and CF(0) - the membrane proton channel. CF(1) has five subunits: alpha(3), beta(3), gamma(1), delta(1), epsilon(1). CF(0) has four main subunits: a(1), b(1), b'(1) and c(9-12).

Its subcellular location is the plastid. The protein localises to the chloroplast thylakoid membrane. The catalysed reaction is ATP + H2O + 4 H(+)(in) = ADP + phosphate + 5 H(+)(out). Produces ATP from ADP in the presence of a proton gradient across the membrane. The catalytic sites are hosted primarily by the beta subunits. This is ATP synthase subunit beta, chloroplastic from Arabis hirsuta (Hairy rock-cress).